A 331-amino-acid chain; its full sequence is Ketol-acid reductoisomerase (NADP(+)) (331 aa).

The KARI N-terminal Rossmann domain maps to 2 to 182; that stretch reads ARMYYDTDAN…GGTRAGILET (181 aa). NADP(+)-binding positions include 25–28, Ser51, Ser53, and 83–86; these read YGSQ and DEVQ. His108 is a catalytic residue. NADP(+) is bound at residue Gly134. One can recognise a KARI C-terminal knotted domain in the interval 183–328; sequence TFREETETDL…KDLRAMFSWL (146 aa). Asp191, Glu195, Glu227, and Glu231 together coordinate Mg(2+). Ser252 provides a ligand contact to substrate.

It belongs to the ketol-acid reductoisomerase family. Mg(2+) is required as a cofactor.

It carries out the reaction (2R)-2,3-dihydroxy-3-methylbutanoate + NADP(+) = (2S)-2-acetolactate + NADPH + H(+). The enzyme catalyses (2R,3R)-2,3-dihydroxy-3-methylpentanoate + NADP(+) = (S)-2-ethyl-2-hydroxy-3-oxobutanoate + NADPH + H(+). It functions in the pathway amino-acid biosynthesis; L-isoleucine biosynthesis; L-isoleucine from 2-oxobutanoate: step 2/4. The protein operates within amino-acid biosynthesis; L-valine biosynthesis; L-valine from pyruvate: step 2/4. Involved in the biosynthesis of branched-chain amino acids (BCAA). Catalyzes an alkyl-migration followed by a ketol-acid reduction of (S)-2-acetolactate (S2AL) to yield (R)-2,3-dihydroxy-isovalerate. In the isomerase reaction, S2AL is rearranged via a Mg-dependent methyl migration to produce 3-hydroxy-3-methyl-2-ketobutyrate (HMKB). In the reductase reaction, this 2-ketoacid undergoes a metal-dependent reduction by NADPH to yield (R)-2,3-dihydroxy-isovalerate. The sequence is that of Ketol-acid reductoisomerase (NADP(+)) from Rippkaea orientalis (strain PCC 8801 / RF-1) (Cyanothece sp. (strain PCC 8801)).